The chain runs to 187 residues: ATP synthase subunit delta (187 aa).

The protein belongs to the ATPase delta chain family. F-type ATPases have 2 components, F(1) - the catalytic core - and F(0) - the membrane proton channel. F(1) has five subunits: alpha(3), beta(3), gamma(1), delta(1), epsilon(1). F(0) has three main subunits: a(1), b(2) and c(10-14). The alpha and beta chains form an alternating ring which encloses part of the gamma chain. F(1) is attached to F(0) by a central stalk formed by the gamma and epsilon chains, while a peripheral stalk is formed by the delta and b chains.

Its subcellular location is the cell inner membrane. F(1)F(0) ATP synthase produces ATP from ADP in the presence of a proton or sodium gradient. F-type ATPases consist of two structural domains, F(1) containing the extramembraneous catalytic core and F(0) containing the membrane proton channel, linked together by a central stalk and a peripheral stalk. During catalysis, ATP synthesis in the catalytic domain of F(1) is coupled via a rotary mechanism of the central stalk subunits to proton translocation. In terms of biological role, this protein is part of the stalk that links CF(0) to CF(1). It either transmits conformational changes from CF(0) to CF(1) or is implicated in proton conduction. The protein is ATP synthase subunit delta of Leptospira biflexa serovar Patoc (strain Patoc 1 / Ames).